The chain runs to 228 residues: HTH-type transcriptional regulator ArcR (228 aa).

Residue 22–141 (SYINIPVGVL…VKLFSLLSET (120 aa)) participates in a nucleoside 3',5'-cyclic phosphate binding. The HTH crp-type domain maps to 155 to 228 (KLAKERVTKI…SKNWLVSKDL (74 aa)). The H-T-H motif DNA-binding region spans 188 to 207 (IQLLSDMAGISRETTSHIIN).

The protein resides in the cytoplasm. In terms of biological role, positively regulates the expression of the arcABDCR operon under anaerobic conditions, thus playing an essential role in arginine catabolism. May also control the expression of genes encoding proteins which are involved in anaerobic metabolism. Can bind cyclic AMP. The protein is HTH-type transcriptional regulator ArcR (arcR) of Staphylococcus epidermidis (strain ATCC 35984 / DSM 28319 / BCRC 17069 / CCUG 31568 / BM 3577 / RP62A).